A 207-amino-acid polypeptide reads, in one-letter code: Guanylate kinase (207 aa).

The Guanylate kinase-like domain maps to 6–185 (GLLIVLSGPS…AKNRIQCIVE (180 aa)). Residue 13–20 (GPSGVGKG) participates in ATP binding.

Belongs to the guanylate kinase family.

Its subcellular location is the cytoplasm. It carries out the reaction GMP + ATP = GDP + ADP. Functionally, essential for recycling GMP and indirectly, cGMP. In Staphylococcus aureus (strain USA300), this protein is Guanylate kinase.